The chain runs to 156 residues: Small ribosomal subunit protein uS7 (156 aa).

Belongs to the universal ribosomal protein uS7 family. Part of the 30S ribosomal subunit. Contacts proteins S9 and S11.

Functionally, one of the primary rRNA binding proteins, it binds directly to 16S rRNA where it nucleates assembly of the head domain of the 30S subunit. Is located at the subunit interface close to the decoding center, probably blocks exit of the E-site tRNA. The sequence is that of Small ribosomal subunit protein uS7 from Campylobacter concisus (strain 13826).